The primary structure comprises 357 residues: Phosphoribosylformylglycinamidine cyclo-ligase (357 aa).

This sequence belongs to the AIR synthase family.

It localises to the cytoplasm. The catalysed reaction is 2-formamido-N(1)-(5-O-phospho-beta-D-ribosyl)acetamidine + ATP = 5-amino-1-(5-phospho-beta-D-ribosyl)imidazole + ADP + phosphate + H(+). Its pathway is purine metabolism; IMP biosynthesis via de novo pathway; 5-amino-1-(5-phospho-D-ribosyl)imidazole from N(2)-formyl-N(1)-(5-phospho-D-ribosyl)glycinamide: step 2/2. The protein is Phosphoribosylformylglycinamidine cyclo-ligase of Rhizobium leguminosarum.